Reading from the N-terminus, the 212-residue chain is MSEDKNYIIDPLTALCKVALLHFMPDKTKLAINHHVLYIQGYSYYQWLERMKNGDSRVDISNLNMPIIKAVKWYIIDSEDKAELDSETCNNILIITKYTIKGLIKLQQTYCTDNAIKIILQYLINLLRDAIDNNWNDDNCVKIDNHHNILSDKIKKNFESQTISAISKILTDAERMSGSQEDVNALIDCAHKLLINRDTVFVRMMKEVNTHL.

This is an uncharacterized protein from Acanthamoeba polyphaga (Amoeba).